A 90-amino-acid chain; its full sequence is MAVKIRLKRMGAKKSPFYRIVVADSRSPRDGRFIETVGTYNPLAKPAEVKIDEELALKWLQTGAKPSDTVRNLFSKEGIMEKFHNAKQSK.

This sequence belongs to the bacterial ribosomal protein bS16 family.

This chain is Small ribosomal subunit protein bS16, found in Bacillus licheniformis (strain ATCC 14580 / DSM 13 / JCM 2505 / CCUG 7422 / NBRC 12200 / NCIMB 9375 / NCTC 10341 / NRRL NRS-1264 / Gibson 46).